Reading from the N-terminus, the 404-residue chain is MYFLNQLIFQDVSVMSVDKREDMSRSFQKCLNLRYPIIQAPMAGVTTIEMAAKACIAGAIASLPLSHLDFRKVNDIEKLKLMVSQFRDQVADESLEGNLNLNFFCHDIVDKPTDLQTANWAKLYRKSMNVPIDMNEIKFDNGNVSFKAFEKENALQDFFQYLSDGFRPKIISFHFGHPSKSTIEYLQKIGILIFVTATSVREVRLLARLGINGIVCQGYEAGGHRGNFLVNDPKDDENLSTVQLVKRTVDELAEMKNKGLIHATPFVIAAGGIMDSKDISYMLSQQADAVQVGTAFLGCSESNASKNFSSPFTRETTTKMVNIISGKPARTISTPFIEKVIANFQGEELPPYGYMYSAFKQVRKKYPELANFILAGQGFQNVQSGITTDKKIETMGARLKIDGK.

41–43 (PMA) serves as a coordination point for FMN. H224 (proton acceptor) is an active-site residue. Position 224 (H224) interacts with substrate. FMN is bound by residues 270–272 (AGG) and 293–294 (GT).

It belongs to the nitronate monooxygenase family. NMO class I subfamily. FMN serves as cofactor.

The protein resides in the cytoplasm. It carries out the reaction ethylnitronate + O2 = chemical entity + acetaldehyde + nitrite + H(+). In terms of biological role, catalyzes the oxidation of alkyl nitronates to produce the corresponding carbonyl compounds and nitrites. This Saccharomyces cerevisiae (strain ATCC 204508 / S288c) (Baker's yeast) protein is Putative nitronate monooxygenase.